The following is a 328-amino-acid chain: Methionyl-tRNA formyltransferase (328 aa).

(6S)-5,6,7,8-tetrahydrofolate is bound at residue 110-113 (SLLP).

The protein belongs to the Fmt family.

It carries out the reaction L-methionyl-tRNA(fMet) + (6R)-10-formyltetrahydrofolate = N-formyl-L-methionyl-tRNA(fMet) + (6S)-5,6,7,8-tetrahydrofolate + H(+). Its function is as follows. Attaches a formyl group to the free amino group of methionyl-tRNA(fMet). The formyl group appears to play a dual role in the initiator identity of N-formylmethionyl-tRNA by promoting its recognition by IF2 and preventing the misappropriation of this tRNA by the elongation apparatus. The protein is Methionyl-tRNA formyltransferase of Prochlorococcus marinus (strain AS9601).